A 695-amino-acid polypeptide reads, in one-letter code: Phosphate acetyltransferase (695 aa).

The segment at 374–695 (FRYQLIQRAQ…LTAIQASVAR (322 aa)) is phosphate acetyltransferase.

In the N-terminal section; belongs to the CobB/CobQ family. It in the C-terminal section; belongs to the phosphate acetyltransferase and butyryltransferase family. In terms of assembly, homohexamer.

The protein localises to the cytoplasm. It catalyses the reaction acetyl-CoA + phosphate = acetyl phosphate + CoA. It participates in metabolic intermediate biosynthesis; acetyl-CoA biosynthesis; acetyl-CoA from acetate: step 2/2. Functionally, involved in acetate metabolism. The protein is Phosphate acetyltransferase (pta) of Pseudomonas putida (strain ATCC 47054 / DSM 6125 / CFBP 8728 / NCIMB 11950 / KT2440).